Reading from the N-terminus, the 449-residue chain is Cyclin-B1-1 (449 aa).

Disordered stretches follow at residues 1 to 34 and 90 to 143; these read MATRSQNVAAAPQPPQNRGNVAALGKQKAVVAGR and AVAP…SVRK. Composition is skewed to low complexity over residues 90-102 and 121-134; these read AVAPAAVARPAQR and EISSDSDQSMRQQS.

It belongs to the cyclin family. Cyclin AB subfamily.

The sequence is that of Cyclin-B1-1 (CYCB1-1) from Oryza sativa subsp. japonica (Rice).